The primary structure comprises 364 residues: tRNA-specific 2-thiouridylase MnmA (364 aa).

ATP-binding positions include 6–13 (AMSGGVDS) and Leu32. The active-site Nucleophile is the Cys101. A disulfide bond links Cys101 and Cys193. Gly125 is a binding site for ATP. The segment at 143–145 (KDQ) is interaction with tRNA. Cys193 acts as the Cysteine persulfide intermediate in catalysis.

This sequence belongs to the MnmA/TRMU family.

It is found in the cytoplasm. The enzyme catalyses S-sulfanyl-L-cysteinyl-[protein] + uridine(34) in tRNA + AH2 + ATP = 2-thiouridine(34) in tRNA + L-cysteinyl-[protein] + A + AMP + diphosphate + H(+). Its function is as follows. Catalyzes the 2-thiolation of uridine at the wobble position (U34) of tRNA, leading to the formation of s(2)U34. The protein is tRNA-specific 2-thiouridylase MnmA of Rhodococcus opacus (strain B4).